The following is a 260-amino-acid chain: Snake venom serine protease homolog (260 aa).

The first 18 residues, 1–18, serve as a signal peptide directing secretion; that stretch reads MVLVRVLANLLMLQLSYA. Positions 19-24 are excised as a propeptide; that stretch reads QKSSEL. The Peptidase S1 domain maps to 25 to 251; the sequence is IIGGDECNIN…HLDWIKSIIA (227 aa). Disulfide bonds link C31-C165, C52-C68, C100-C258, C144-C212, C176-C191, and C202-C227. D112 acts as the Charge relay system in catalysis. N-linked (GlcNAc...) asparagine glycans are attached at residues N123 and N124. The active-site Charge relay system is S206.

Belongs to the peptidase S1 family. Snake venom subfamily. As to expression, expressed by the venom gland.

Its subcellular location is the secreted. Snake venom serine protease homolog. May act in the hemostasis system of the prey. This chain is Snake venom serine protease homolog, found in Protobothrops jerdonii (Jerdon's pitviper).